Reading from the N-terminus, the 414-residue chain is MLDKIGIPKRLAWGFLGVVLFMMGDGLEQGWLSPFLIENGLTVQQSASIFSIYGIALAIASWFSGVCLEAFGAKRTMFMGLLFYVIGTAAFIVFGFEQLNLPVMYVTYFVKGLGYPLFAYSFLTWVIYRTPQSKLSTAVGWFWIAYCLGMFVFGAWYSSYAIKAFGYLNTLWSSIFWVCLGAFFALFINKDRFEKKKRKRSETAEELLKGVTILFTNPRVLTGGIIRIINSIGTYGFPVFLPMHMAQHGISTNVWLQIWGTIFLGNIVFNLIFGIVGDKFGWKNTVIWFGGVGCGIFTVLLYYAPVFSGGSLAVVSVIGFIWGGLLAGYVPIGAIVPTVAGKDKGAAMSVLNLAAGLSAFVGPALAWLFIGLVGAQGVVWIFAALYLASAVLTKCIHIPEEKAVKEETSPQYAS.

The Cytoplasmic portion of the chain corresponds to 1-11 (MLDKIGIPKRL). Residues 12 to 32 (AWGFLGVVLFMMGDGLEQGWL) form a helical membrane-spanning segment. Residues 33-47 (SPFLIENGLTVQQSA) lie on the Extracellular side of the membrane. Residues 48–68 (SIFSIYGIALAIASWFSGVCL) traverse the membrane as a helical segment. The Cytoplasmic segment spans residues 69–75 (EAFGAKR). The helical transmembrane segment at 76-96 (TMFMGLLFYVIGTAAFIVFGF) threads the bilayer. Over 97–107 (EQLNLPVMYVT) the chain is Extracellular. A helical membrane pass occupies residues 108–128 (YFVKGLGYPLFAYSFLTWVIY). At 129–136 (RTPQSKLS) the chain is on the cytoplasmic side. A helical membrane pass occupies residues 137–157 (TAVGWFWIAYCLGMFVFGAWY). Topologically, residues 158 to 167 (SSYAIKAFGY) are extracellular. The helical transmembrane segment at 168–188 (LNTLWSSIFWVCLGAFFALFI) threads the bilayer. The Cytoplasmic portion of the chain corresponds to 189–219 (NKDRFEKKKRKRSETAEELLKGVTILFTNPR). A helical membrane pass occupies residues 220-240 (VLTGGIIRIINSIGTYGFPVF). At 241–255 (LPMHMAQHGISTNVW) the chain is on the extracellular side. The helical transmembrane segment at 256 to 276 (LQIWGTIFLGNIVFNLIFGIV) threads the bilayer. The Cytoplasmic segment spans residues 277–286 (GDKFGWKNTV). A helical membrane pass occupies residues 287-307 (IWFGGVGCGIFTVLLYYAPVF). Residues 308–316 (SGGSLAVVS) are Extracellular-facing. The helical transmembrane segment at 317–337 (VIGFIWGGLLAGYVPIGAIVP) threads the bilayer. Topologically, residues 338–343 (TVAGKD) are cytoplasmic. A helical membrane pass occupies residues 344-364 (KGAAMSVLNLAAGLSAFVGPA). At 365–375 (LAWLFIGLVGA) the chain is on the extracellular side. Residues 376 to 398 (QGVVWIFAALYLASAVLTKCIHI) form a helical membrane-spanning segment. At 399–414 (PEEKAVKEETSPQYAS) the chain is on the cytoplasmic side.

The protein belongs to the major facilitator superfamily. Sugar transporter (TC 2.A.1.1) family. CsbX subfamily.

It is found in the cell membrane. The polypeptide is Putative transporter YoaB (yoaB) (Bacillus subtilis (strain 168)).